Consider the following 145-residue polypeptide: Large ribosomal subunit protein mL43 (145 aa).

It belongs to the mitochondrion-specific ribosomal protein mL43 family. In terms of assembly, component of the mitochondrial large ribosomal subunit (mt-LSU). Mature yeast 74S mitochondrial ribosomes consist of a small (37S) and a large (54S) subunit. The 37S small subunit contains a 15S ribosomal RNA (15S mt-rRNA) and at least 32 different proteins. The 54S large subunit contains a 21S rRNA (21S mt-rRNA) and at least 45 different proteins.

Its subcellular location is the mitochondrion. Its function is as follows. Component of the mitochondrial ribosome (mitoribosome), a dedicated translation machinery responsible for the synthesis of mitochondrial genome-encoded proteins, including at least some of the essential transmembrane subunits of the mitochondrial respiratory chain. The mitoribosomes are attached to the mitochondrial inner membrane and translation products are cotranslationally integrated into the membrane. Also has an extraribosomal function, being essential for mitochondrial genome integrity. May interact with MHR1 to take part in the mtDNA repair mechanism. The polypeptide is Large ribosomal subunit protein mL43 (mrpl51) (Schizosaccharomyces pombe (strain 972 / ATCC 24843) (Fission yeast)).